The following is a 623-amino-acid chain: Heterogeneous nuclear ribonucleoprotein L (623 aa).

Residues 1-16 (MSRRLLPRAEKRRRRL) are compositionally biased toward basic residues. A disordered region spans residues 1-97 (MSRRLLPRAE…NYDDPHKTPA (97 aa)). Residues 17-27 (EQRQQPDEQLR) are compositionally biased toward basic and acidic residues. Over residues 28–37 (RAGAMVKMAA) the composition is skewed to low complexity. A compositionally biased stretch (gly residues) spans 38–54 (AGGGGGGGRYYGGGNEG). Residues Lys-59 and Lys-62 each participate in a glycyl lysine isopeptide (Lys-Gly) (interchain with G-Cter in SUMO2) cross-link. Residues 69 to 87 (QHGGGGGGGSGAAGGGGGE) are compositionally biased toward gly residues. The residue at position 98 (Ser-98) is a Phosphoserine. The RRM 1 domain occupies 99–173 (PVVHIRGLID…HPAFVNYSTS (75 aa)). Lys-133 is covalently cross-linked (Glycyl lysine isopeptide (Lys-Gly) (interchain with G-Cter in SUMO2)). Ser-182 carries the phosphoserine modification. One can recognise an RRM 2 domain in the interval 190–267 (SVLLFTILNP…CTLKIEYAKP (78 aa)). Residue Lys-266 is modified to N6-acetyllysine. A compositionally biased stretch (polar residues) spans 281-298 (DYTNPNLSGQGDPGSNPN). A disordered region spans residues 281 to 413 (DYTNPNLSGQ…PPPPDYGPHA (133 aa)). 2 positions are modified to phosphoserine: Ser-288 and Ser-295. Lys-299 is covalently cross-linked (Glycyl lysine isopeptide (Lys-Gly) (interchain with G-Cter in SUMO2)). Asymmetric dimethylarginine is present on residues Arg-388 and Arg-392. Positions 398–409 (GHPPPPPPPPDY) are enriched in pro residues. The residue at position 415 (Ser-415) is a Phosphoserine. RRM domains lie at 416–490 (PVLM…VSKQ) and 498–586 (SYGL…WDSK). At Ser-578 the chain carries Phosphoserine; by CaMK4. Residue Lys-602 forms a Glycyl lysine isopeptide (Lys-Gly) (interchain with G-Cter in SUMO2) linkage.

As to quaternary structure, identified in a IGF2BP1-dependent mRNP granule complex containing untranslated mRNAs. Interacts with HNRNPLL. Interacts with APEX1; the interaction is DNA-dependent. Component of a complex with SETD2. Interacts with ELAVL1. Part of a transcription inhibitory ribonucleoprotein complex composed at least of the circular RNA circZNF827, ZNF827 and HNRNPK. Interacts with CHD8 in an RNA-dependent manner. In terms of processing, several isoelectric forms of the L protein are probably the results of post-translational modifications. Post-translationally, phosphorylation at Ser-578 by CaMK4 enhances interaction with a CaMK4-responsive RNA element (CaRRE1), and prevents inclusion of the stress axis-regulated exon (STREX) of the KCNMA1 potassium channel transcripts upon membrane depolarization.

The protein resides in the nucleus. The protein localises to the nucleoplasm. Its subcellular location is the cytoplasm. Functionally, splicing factor binding to exonic or intronic sites and acting as either an activator or repressor of exon inclusion. Exhibits a binding preference for CA-rich elements. Component of the heterogeneous nuclear ribonucleoprotein (hnRNP) complexes and associated with most nascent transcripts. Associates, together with APEX1, to the negative calcium responsive element (nCaRE) B2 of the APEX2 promoter. As part of a ribonucleoprotein complex composed at least of ZNF827, HNRNPK and the circular RNA circZNF827 that nucleates the complex on chromatin, may negatively regulate the transcription of genes involved in neuronal differentiation. Regulates alternative splicing of a core group of genes involved in neuronal differentiation, likely by mediating H3K36me3-coupled transcription elongation and co-transcriptional RNA processing via interaction with CHD8. This is Heterogeneous nuclear ribonucleoprotein L from Rattus norvegicus (Rat).